Reading from the N-terminus, the 179-residue chain is Small ribosomal subunit protein uS5 (179 aa).

One can recognise an S5 DRBM domain in the interval 13–76; that stretch reads LDERVVLINR…EAAKRNLIRV (64 aa). Residues 160-179 are disordered; the sequence is DMTPQELNARRMRRETTEAA.

This sequence belongs to the universal ribosomal protein uS5 family. As to quaternary structure, part of the 30S ribosomal subunit. Contacts proteins S4 and S8.

With S4 and S12 plays an important role in translational accuracy. Functionally, located at the back of the 30S subunit body where it stabilizes the conformation of the head with respect to the body. The chain is Small ribosomal subunit protein uS5 from Chloroflexus aggregans (strain MD-66 / DSM 9485).